The chain runs to 84 residues: UPF0473 protein CLI_2624 (84 aa).

It belongs to the UPF0473 family.

This Clostridium botulinum (strain Langeland / NCTC 10281 / Type F) protein is UPF0473 protein CLI_2624.